The sequence spans 1227 residues: Pesticidal crystal protein Cry1Be (1227 aa).

The protein belongs to the delta endotoxin family.

Promotes colloidosmotic lysis by binding to the midgut epithelial cells of many lepidopteran larvae. The protein is Pesticidal crystal protein Cry1Be (cry1Be) of Bacillus thuringiensis.